We begin with the raw amino-acid sequence, 126 residues long: Probable prefoldin subunit 4 (126 aa).

It belongs to the prefoldin subunit beta family. As to quaternary structure, heterohexamer of two PFD-alpha type and four PFD-beta type subunits.

In terms of biological role, binds specifically to cytosolic chaperonin (c-CPN) and transfers target proteins to it. Binds to nascent polypeptide chain and promotes folding in an environment in which there are many competing pathways for nonnative proteins. The chain is Probable prefoldin subunit 4 (pfd-4) from Caenorhabditis elegans.